Reading from the N-terminus, the 182-residue chain is Protein canopy homolog 2 (182 aa).

Residues 1-20 form the signal peptide; it reads MKGWGWLALLLGVLLGTAWA. The Saposin B-type domain maps to 24–175; sequence QDLHCGACRA…KRTDLCDHAL (152 aa). 3 disulfides stabilise this stretch: Cys28–Cys171, Cys31–Cys164, and Cys86–Cys137. Phosphoserine is present on Ser115. The Prevents secretion from ER signature appears at 179–182; it reads HDEL.

The protein belongs to the canopy family. In terms of assembly, interacts with MYLIP/MIR.

The protein localises to the endoplasmic reticulum. Functionally, positive regulator of neurite outgrowth by stabilizing myosin regulatory light chain (MRLC). It prevents MIR-mediated MRLC ubiquitination and its subsequent proteasomal degradation. The protein is Protein canopy homolog 2 (Cnpy2) of Mus musculus (Mouse).